A 427-amino-acid chain; its full sequence is Serine--tRNA ligase (427 aa).

Residue 231–233 (TAE) coordinates L-serine. Position 262–264 (262–264 (RSE)) interacts with ATP. Glu-285 is an L-serine binding site. 349 to 352 (EISS) is a binding site for ATP. Residue Ser-385 coordinates L-serine.

Belongs to the class-II aminoacyl-tRNA synthetase family. Type-1 seryl-tRNA synthetase subfamily. In terms of assembly, homodimer. The tRNA molecule binds across the dimer.

Its subcellular location is the cytoplasm. The enzyme catalyses tRNA(Ser) + L-serine + ATP = L-seryl-tRNA(Ser) + AMP + diphosphate + H(+). The catalysed reaction is tRNA(Sec) + L-serine + ATP = L-seryl-tRNA(Sec) + AMP + diphosphate + H(+). The protein operates within aminoacyl-tRNA biosynthesis; selenocysteinyl-tRNA(Sec) biosynthesis; L-seryl-tRNA(Sec) from L-serine and tRNA(Sec): step 1/1. Its function is as follows. Catalyzes the attachment of serine to tRNA(Ser). Is also able to aminoacylate tRNA(Sec) with serine, to form the misacylated tRNA L-seryl-tRNA(Sec), which will be further converted into selenocysteinyl-tRNA(Sec). The sequence is that of Serine--tRNA ligase from Rhizobium johnstonii (strain DSM 114642 / LMG 32736 / 3841) (Rhizobium leguminosarum bv. viciae).